The primary structure comprises 604 residues: Glutamyl-tRNA(Gln) amidotransferase subunit B, mitochondrial (604 aa).

The N-terminal 48 residues, 1–48 (MIRQCLSRRGAYSRYRLAARGVELAEPFHHQSSRPQGRRNWSSSPRCS), are a transit peptide targeting the mitochondrion. Positions 28–57 (FHHQSSRPQGRRNWSSSPRCSLDIRTDTPR) are disordered. The span at 33–46 (SRPQGRRNWSSSPR) shows a compositional bias: polar residues.

Belongs to the GatB/GatE family. GatB subfamily. In terms of assembly, subunit of the heterotrimeric GatCAB amidotransferase (AdT) complex, composed of A, B and C subunits.

It is found in the mitochondrion. It carries out the reaction L-glutamyl-tRNA(Gln) + L-glutamine + ATP + H2O = L-glutaminyl-tRNA(Gln) + L-glutamate + ADP + phosphate + H(+). In terms of biological role, allows the formation of correctly charged Gln-tRNA(Gln) through the transamidation of misacylated Glu-tRNA(Gln) in the mitochondria. The reaction takes place in the presence of glutamine and ATP through an activated gamma-phospho-Glu-tRNA(Gln). In Blastomyces gilchristii (strain SLH14081) (Blastomyces dermatitidis), this protein is Glutamyl-tRNA(Gln) amidotransferase subunit B, mitochondrial.